Here is a 503-residue protein sequence, read N- to C-terminus: Arabinose import ATP-binding protein AraG (503 aa).

ABC transporter domains lie at 5–240 (LRFD…MVGR) and 253–497 (LGDV…LPQG). 37–44 (GENGAGKS) serves as a coordination point for ATP.

It belongs to the ABC transporter superfamily. Arabinose importer (TC 3.A.1.2.2) family. In terms of assembly, the complex is composed of two ATP-binding proteins (AraG), two transmembrane proteins (AraH) and a solute-binding protein (AraF).

It is found in the cell inner membrane. The catalysed reaction is L-arabinose(out) + ATP + H2O = L-arabinose(in) + ADP + phosphate + H(+). In terms of biological role, part of the ABC transporter complex AraFGH involved in arabinose import. Responsible for energy coupling to the transport system. In Burkholderia pseudomallei (strain 1710b), this protein is Arabinose import ATP-binding protein AraG.